The following is a 127-amino-acid chain: HTH-type transcriptional regulator ImmR (127 aa).

Residues 1 to 12 (MSLGKRLKEARQ) show a composition bias toward basic and acidic residues. A disordered region spans residues 1–22 (MSLGKRLKEARQKAGYTQKEAA). Residues 7–61 (LKEARQKAGYTQKEAAEKLNIGNNNLSNYERDYRDPDTDTLLKLSNLYNVSTDYL) enclose the HTH cro/C1-type domain. A DNA-binding region (H-T-H motif) is located at residues 18-37 (QKEAAEKLNIGNNNLSNYER).

This Bacillus subtilis (strain 168) protein is HTH-type transcriptional regulator ImmR (immR).